Consider the following 440-residue polypeptide: Serine/threonine-protein kinase toxin HipA (440 aa).

At serine 150 the chain carries Phosphoserine; by autocatalysis. ATP is bound by residues alanine 152 to lysine 157, lysine 181, and glutamate 234 to phenylalanine 236. Aspartate 309 (proton acceptor) is an active-site residue. Residues histidine 311–asparagine 314 and tyrosine 331–aspartate 332 contribute to the ATP site. The DNA-binding element occupies lysine 379–arginine 382.

The protein belongs to the HipA Ser/Thr kinase family. In terms of assembly, forms a HipA(2)HipB(2) heterotetramer which can interact with a single operator on DNA. When 2 operators are present each HipB dimer contacts 1 HipA molecule, which are brought together by the DNA bend and dimerize, blocking the HipA active site and inactivating its toxic activity. Mutations present in allele hipA7 (G22S and D291A) decrease the affinity of HipA for HipB. Autophosphorylates intermolecularly on Ser-150; phosphorylated form not seen to bind ATP and no longer has kinase activity.

The catalysed reaction is L-seryl-[protein] + ATP = O-phospho-L-seryl-[protein] + ADP + H(+). The enzyme catalyses L-threonyl-[protein] + ATP = O-phospho-L-threonyl-[protein] + ADP + H(+). Its activity is regulated as follows. Once phosphorylated no longer has kinase activity. Functionally, toxic component of a type II toxin-antitoxin (TA) system, first identified by mutations that increase production of persister cells, a fraction of cells that are phenotypic variants not killed by antibiotics, which lead to multidrug tolerance. Persistence may be ultimately due to global remodeling of the persister cell's ribosomes. Phosphorylates Glu-tRNA-ligase (AC P04805, gltX, on 'Ser-239') in vivo. Phosphorylation of GltX prevents it from being charged, leading to an increase in uncharged tRNA(Glu). This induces amino acid starvation and the stringent response via RelA/SpoT and increased (p)ppGpp levels, which inhibits replication, transcription, translation and cell wall synthesis, reducing growth and leading to persistence and multidrug resistance. Once the level of HipA exceeds a threshold cells become dormant, and the length of dormancy is determined by how much HipA levels exceed the threshold. The hipA7 mutation (a double G22S D291A mutation) leads to increased generation of persister cells (cells that survive antibiotic treatment) probably by entering into a dormant state, as well as cold-sensitivity. Wild-type cells produce persisters at a frequency of 10(-6) to 10(-5) whereas hipA7 cells produce about 100-fold more persisters. hipA7 decreases the affinity for antitoxin HipB, leading to increased HipA levels and persistence; depending on the protein level, can be toxic enough to reduce cell growth or even kill cells. Generation of persister cells requires (p)ppGpp as cells lacking relA or relA/spoT generate fewer or no persister cells respectively compared to hipA7. The toxic effect of HipA is neutralized by its cognate antitoxin HipB. Also neutralized by overexpression of gltX. With HipB acts as a corepressor for transcription of the hipBA promoter; binding of HipA-HipB to DNA induces a 70 degree bend. This brings together and dimerizes 2 HipA molecules, which distorts the promoter region, preventing sigma-factor binding; additionally HipA and HipB would physically prevent RNA core polymerase from contacting the -35 promoter box. May play a role in biofilm formation. The chain is Serine/threonine-protein kinase toxin HipA (hipA) from Escherichia coli (strain K12).